We begin with the raw amino-acid sequence, 621 residues long: Phosphatidylinositol-3,5-bisphosphate 3-phosphatase MTMR6 (621 aa).

The GRAM domain maps to 1 to 101; that stretch reads MEHIRTTKVE…YNSLLQLSKQ (101 aa). The segment at 2–141 is interaction with RAB1B; sequence EHIRTTKVEQ…EEYKRMGVPN (140 aa). Phosphotyrosine is present on Y108. The 376-residue stretch at 124–499 folds into the Myotubularin phosphatase domain; the sequence is GWQLIDLAEE…FNFKFWRNMY (376 aa). Residues N248, N273, and I274 each coordinate a 1,2-diacyl-sn-glycero-3-phospho-(1D-myo-inositol-3,5-bisphosphate). A 1,2-diacyl-sn-glycero-3-phospho-(1D-myo-inositol-3-phosphate)-binding residues include N248, N273, and I274. Catalysis depends on C336, which acts as the Phosphocysteine intermediate. S337, D338, G339, W340, D341, R342, K378, and R382 together coordinate a 1,2-diacyl-sn-glycero-3-phospho-(1D-myo-inositol-3,5-bisphosphate). The a 1,2-diacyl-sn-glycero-3-phospho-(1D-myo-inositol-3-phosphate) site is built by S337, D338, G339, W340, D341, and R342. An a 1,2-diacyl-sn-glycero-3-phospho-(1D-myo-inositol-3-phosphate)-binding site is contributed by R382. S556, S561, S589, and S611 each carry phosphoserine.

This sequence belongs to the protein-tyrosine phosphatase family. Non-receptor class myotubularin subfamily. As to quaternary structure, homodimer. Heterodimer (via C-terminus) with MTMR9 (via C-terminus). Interacts with ALKBH4. Interacts with KCNN4. Interacts (via GRAM domain) with RAB1B (in GDP-bound form); the interaction regulates MTMR6 recruitment to the endoplasmic reticulum-Golgi intermediate compartment. Expressed in CD4+ T-cells.

It localises to the cytoplasm. The protein localises to the endoplasmic reticulum-Golgi intermediate compartment. Its subcellular location is the endoplasmic reticulum. The protein resides in the cell projection. It is found in the ruffle membrane. It localises to the perinuclear region. It carries out the reaction a 1,2-diacyl-sn-glycero-3-phospho-(1D-myo-inositol-3,5-bisphosphate) + H2O = a 1,2-diacyl-sn-glycero-3-phospho-(1D-myo-inositol-5-phosphate) + phosphate. The enzyme catalyses a 1,2-diacyl-sn-glycero-3-phospho-(1D-myo-inositol-3-phosphate) + H2O = a 1,2-diacyl-sn-glycero-3-phospho-(1D-myo-inositol) + phosphate. The catalysed reaction is 1,2-dioctanoyl-sn-glycero-3-phospho-(1D-myo-inositol-3,5-bisphosphate) + H2O = 1,2-dioctanoyl-sn-glycero-3-phospho-(1D-myo-inositol-5-phosphate) + phosphate. It catalyses the reaction 1,2-dioctanoyl-sn-glycero-3-phospho-(1-D-myo-inositol-3-phosphate) + H2O = 1,2-dioctanoyl-sn-glycero-3-phospho-(1D-myo-inositol) + phosphate. Allosterically activated by phosphatidylserine and/or phosphatidylinositol 4-phosphate (PtdIns(4)P), and phosphatidylinositol 5-phosphate (PtdIns(5)P). Interaction with MTMR9 increases catalytic activity towards phosphatidylinositol 3,5-bisphosphate. Its function is as follows. Lipid phosphatase that specifically dephosphorylates the D-3 position of phosphatidylinositol 3-phosphate and phosphatidylinositol 3,5-bisphosphate, generating phosphatidylinositol and phosphatidylinositol 5-phosphate. Binds with high affinity to phosphatidylinositol 3,5-bisphosphate (PtdIns(3,5)P2) but also to phosphatidylinositol 3-phosphate (PtdIns(3)P), phosphatidylinositol 4-phosphate (PtdIns(4)P), and phosphatidylinositol 5-phosphate (PtdIns(5)P), phosphatidic acid and phosphatidylserine. Negatively regulates ER-Golgi protein transport. Probably in association with MTMR9, plays a role in the late stages of macropinocytosis by dephosphorylating phosphatidylinositol 3-phosphate in membrane ruffles. Acts as a negative regulator of KCNN4/KCa3.1 channel activity in CD4(+) T-cells possibly by decreasing intracellular levels of phosphatidylinositol 3-phosphate. Negatively regulates proliferation of reactivated CD4(+) T-cells. In complex with MTMR9, negatively regulates DNA damage-induced apoptosis. The formation of the MTMR6-MTMR9 complex stabilizes both MTMR6 and MTMR9 protein levels. This chain is Phosphatidylinositol-3,5-bisphosphate 3-phosphatase MTMR6, found in Homo sapiens (Human).